The following is a 765-amino-acid chain: Endothelin-converting enzyme 2 (765 aa).

The Cytoplasmic segment spans residues 1–60 (MSVALQELGGGGNMVEYKRATLRDEDAPETPVEGGASPDAVEAGFRKRTSRLLGLHTQLE). A helical; Signal-anchor for type II membrane protein membrane pass occupies residues 61–81 (LVLAGVSLLLAALLLGCLVAL). The Lumenal segment spans residues 82 to 765 (GVQYHRDPSH…MNSGQLCEVW (684 aa)). The region spanning 93 to 765 (TCLTEACIRV…MNSGQLCEVW (673 aa)) is the Peptidase M13 domain. Disulfide bonds link Cys94/Cys99, Cys117/Cys750, Cys125/Cys710, Cys181/Cys430, and Cys639/Cys762. N-linked (GlcNAc...) asparagine glycans are attached at residues Asn161, Asn165, Asn206, Asn266, Asn311, Asn378, and Asn534. His602 lines the Zn(2+) pocket. Glu603 is an active-site residue. His606 is a binding site for Zn(2+). 2 N-linked (GlcNAc...) asparagine glycosylation sites follow: Asn627 and Asn635. Glu662 serves as a coordination point for Zn(2+). Residue Asp666 is the Proton donor of the active site.

The protein belongs to the peptidase M13 family. Requires Zn(2+) as cofactor. Isoform ECE2-1 and isoform ECE2-2 are expressed in brain and adrenal gland.

Its subcellular location is the golgi apparatus membrane. It is found in the cytoplasmic vesicle. It localises to the secretory vesicle membrane. The enzyme catalyses Hydrolysis of the 21-Trp-|-Val-22 bond in big endothelin to form endothelin 1.. Functionally, converts big endothelin-1 to endothelin-1. Also involved in the processing of various neuroendocrine peptides, including neurotensin, angiotensin I, substance P, proenkephalin-derived peptides, and prodynorphin-derived peptides. May play a role in amyloid-beta processing. The sequence is that of Endothelin-converting enzyme 2 from Bos taurus (Bovine).